An 885-amino-acid polypeptide reads, in one-letter code: Protein kintoun (885 aa).

6 disordered regions span residues Leu208 to Gly235, Leu371 to Asp390, Glu607 to Cys636, Glu644 to Tyr663, Arg781 to His806, and Asn819 to Glu871. A compositionally biased stretch (basic and acidic residues) spans Thr213–Ala232. Position 376 is a phosphoserine (Ser376). A compositionally biased stretch (basic residues) spans His612 to Arg629. Phosphoserine is present on Ser784. Over residues His824 to Gly837 the composition is skewed to basic and acidic residues. Residues Asn842–Asn855 are compositionally biased toward low complexity.

The protein belongs to the PIH1 family. Kintoun subfamily. In terms of assembly, interacts with Pp1alpha-96A, Pp1-87B, Pp1-13C and flw.

Its subcellular location is the cytoplasm. Its function is as follows. Required for cytoplasmic pre-assembly of axonemal dyneins, thereby playing a central role in motility in cilia and flagella. Involved in pre-assembly of dynein arm complexes in the cytoplasm before intraflagellar transport loads them for the ciliary compartment. In Drosophila mojavensis (Fruit fly), this protein is Protein kintoun.